The primary structure comprises 339 residues: tRNA pseudouridine synthase D (339 aa).

The Nucleophile role is filled by Asp80. The TRUD domain maps to 155–311; the sequence is GFPNYFTEQR…AKGFSWAFEP (157 aa).

This sequence belongs to the pseudouridine synthase TruD family.

It catalyses the reaction uridine(13) in tRNA = pseudouridine(13) in tRNA. Its function is as follows. Responsible for synthesis of pseudouridine from uracil-13 in transfer RNAs. This chain is tRNA pseudouridine synthase D, found in Haemophilus influenzae (strain 86-028NP).